Here is a 326-residue protein sequence, read N- to C-terminus: Pantothenate kinase (326 aa).

Residue 104 to 111 (GSVAVGKS) participates in ATP binding.

It belongs to the prokaryotic pantothenate kinase family.

The protein resides in the cytoplasm. The enzyme catalyses (R)-pantothenate + ATP = (R)-4'-phosphopantothenate + ADP + H(+). It functions in the pathway cofactor biosynthesis; coenzyme A biosynthesis; CoA from (R)-pantothenate: step 1/5. The chain is Pantothenate kinase from Parvibaculum lavamentivorans (strain DS-1 / DSM 13023 / NCIMB 13966).